The sequence spans 389 residues: BTB/POZ domain-containing protein KCTD9 (389 aa).

The region spanning 3–82 (RVTLFLNGSP…PQTDSKPPEG (80 aa)) is the KHA domain. Serine 11 is subject to Phosphoserine. Residues 89–161 (DWLTLNVGGR…LRHGQLIVND (73 aa)) enclose the BTB domain. Pentapeptide repeat domains lie at 224-256 (NFSG…ANLC), 258-297 (ANLE…NFED), and 338-376 (CNLR…AIFE).

In terms of assembly, forms pentamers. Component of a complex composed of 5 subunits of KCTD9 and 5 CUL3.

The protein operates within protein modification; protein ubiquitination. Substrate-specific adapter of a BCR (BTB-CUL3-RBX1) E3 ubiquitin-protein ligase complex, which mediates the ubiquitination of target proteins, leading to their degradation by the proteasome. The chain is BTB/POZ domain-containing protein KCTD9 (KCTD9) from Homo sapiens (Human).